We begin with the raw amino-acid sequence, 445 residues long: Argininosuccinate synthase (445 aa).

ATP is bound by residues alanine 17 to serine 25 and alanine 43. Tyrosine 99 contacts L-citrulline. ATP-binding residues include glycine 129 and threonine 131. Threonine 131, asparagine 135, and aspartate 136 together coordinate L-aspartate. Asparagine 135 provides a ligand contact to L-citrulline. Aspartate 136 serves as a coordination point for ATP. Residues arginine 139 and serine 192 each contribute to the L-citrulline site. Residue aspartate 194 coordinates ATP. Residues threonine 201, glutamate 203, and glutamate 280 each contribute to the L-citrulline site.

Belongs to the argininosuccinate synthase family. Type 2 subfamily. Homotetramer.

The protein resides in the cytoplasm. It carries out the reaction L-citrulline + L-aspartate + ATP = 2-(N(omega)-L-arginino)succinate + AMP + diphosphate + H(+). Its pathway is amino-acid biosynthesis; L-arginine biosynthesis; L-arginine from L-ornithine and carbamoyl phosphate: step 2/3. This chain is Argininosuccinate synthase, found in Burkholderia cenocepacia (strain HI2424).